The sequence spans 1524 residues: Protein dispatched homolog 1 (1524 aa).

The N-linked (GlcNAc...) asparagine glycan is linked to Asn-59. The next 4 membrane-spanning stretches (helical) occupy residues 190-210 (VVVL…GVLV), 500-520 (LLMD…VMCV), 525-545 (MFIT…SYFL), and 549-569 (VFHF…LVGI). The 173-residue stretch at 486–658 (GIEFGIKHSL…VTWLPAVVVL (173 aa)) folds into the SSD domain. An N-linked (GlcNAc...) asparagine glycan is attached at Asn-582. Transmembrane regions (helical) follow at residues 604 to 624 (AALS…ANYV), 638 to 658 (GTAI…VVVL), 719 to 739 (YLWL…VCIN), 988 to 1008 (MGLS…NIII), 1010 to 1030 (LYAI…LVLL), 1040 to 1060 (VTIS…GVAY), 1079 to 1099 (VGSA…MMMP), and 1107 to 1127 (QLGT…TFFF).

This sequence belongs to the dispatched family. Interacts with SHH via the cholesterol anchor of the dually lipid-modified SHH (ShhNp).

The protein localises to the membrane. Functions in hedgehog (Hh) signaling. Regulates the release and extracellular accumulation of cholesterol-modified hedgehog proteins and is hence required for effective production of the Hh signal. Synergizes with SCUBE2 to cause an increase in SHH secretion. The protein is Protein dispatched homolog 1 (DISP1) of Homo sapiens (Human).